A 74-amino-acid polypeptide reads, in one-letter code: Large ribosomal subunit protein bL31 (74 aa).

Zn(2+) contacts are provided by Cys16, Cys18, Cys38, and Cys41.

Belongs to the bacterial ribosomal protein bL31 family. Type A subfamily. Part of the 50S ribosomal subunit. The cofactor is Zn(2+).

Its function is as follows. Binds the 23S rRNA. The polypeptide is Large ribosomal subunit protein bL31 (Salinispora tropica (strain ATCC BAA-916 / DSM 44818 / JCM 13857 / NBRC 105044 / CNB-440)).